The following is a 381-amino-acid chain: Heme A synthase (381 aa).

The disordered stretch occupies residues 1–28; it reads MSNRTIFEEVSSDSKQQSSPTPGGIDRK. The next 8 membrane-spanning stretches (helical) occupy residues 36 to 56, 125 to 145, 151 to 171, 187 to 207, 230 to 250, 287 to 307, 320 to 340, and 344 to 364; these read IRVW…VGGL, VIGL…SIPT, LLLP…MVAS, LATH…YMFL, STGL…VAGI, LVQF…VVVW, FAFN…IVTV, and APVE…VLIL. Histidine 292 provides a ligand contact to heme. Heme is bound at residue histidine 352.

It belongs to the COX15/CtaA family. Type 2 subfamily. Interacts with CtaB. Heme b is required as a cofactor.

It is found in the cell membrane. It carries out the reaction Fe(II)-heme o + 2 A + H2O = Fe(II)-heme a + 2 AH2. It functions in the pathway porphyrin-containing compound metabolism; heme A biosynthesis; heme A from heme O: step 1/1. Functionally, catalyzes the conversion of heme O to heme A by two successive hydroxylations of the methyl group at C8. The first hydroxylation forms heme I, the second hydroxylation results in an unstable dihydroxymethyl group, which spontaneously dehydrates, resulting in the formyl group of heme A. This chain is Heme A synthase, found in Ruegeria sp. (strain TM1040) (Silicibacter sp.).